We begin with the raw amino-acid sequence, 171 residues long: 3-hydroxydecanoyl-[acyl-carrier-protein] dehydratase (171 aa).

The active site involves His70.

The protein belongs to the thioester dehydratase family. FabA subfamily. Homodimer.

It is found in the cytoplasm. It carries out the reaction a (3R)-hydroxyacyl-[ACP] = a (2E)-enoyl-[ACP] + H2O. It catalyses the reaction (3R)-hydroxydecanoyl-[ACP] = (2E)-decenoyl-[ACP] + H2O. The enzyme catalyses (2E)-decenoyl-[ACP] = (3Z)-decenoyl-[ACP]. It functions in the pathway lipid metabolism; fatty acid biosynthesis. Its function is as follows. Necessary for the introduction of cis unsaturation into fatty acids. Catalyzes the dehydration of (3R)-3-hydroxydecanoyl-ACP to E-(2)-decenoyl-ACP and then its isomerization to Z-(3)-decenoyl-ACP. Can catalyze the dehydratase reaction for beta-hydroxyacyl-ACPs with saturated chain lengths up to 16:0, being most active on intermediate chain length. The protein is 3-hydroxydecanoyl-[acyl-carrier-protein] dehydratase of Pseudomonas fluorescens (strain ATCC BAA-477 / NRRL B-23932 / Pf-5).